Consider the following 271-residue polypeptide: MSSHADSKPWTVPALAQAKRDGRKLVMLTAYDAGFARTFDANGVDLILVGDSLGMVVQGHESTLPVTTADMVYHTAAVARVLERALLVADLSFQADATPERALDAATQLLQAGAEMVKIEGAGHKLDVIRYLVEREIPVCSHLGLTPQSVLRFGGYKVQGRGEAGEQLRRDAQAAVDAGVSLIVLECVPTPIAAQISAELRVPTIGIGAGPGCDGQVLVMHDMLGLDSGHRRPKFVKDFLAEGGSVAGAVQAYAQAVRDGSFPDAEHAYAA.

Mg(2+) is bound by residues D51 and D90. Residues 51-52 (DS), D90, and K118 contribute to the 3-methyl-2-oxobutanoate site. A Mg(2+)-binding site is contributed by E120. E186 functions as the Proton acceptor in the catalytic mechanism.

It belongs to the PanB family. Homodecamer; pentamer of dimers. Mg(2+) is required as a cofactor.

It is found in the cytoplasm. It carries out the reaction 3-methyl-2-oxobutanoate + (6R)-5,10-methylene-5,6,7,8-tetrahydrofolate + H2O = 2-dehydropantoate + (6S)-5,6,7,8-tetrahydrofolate. It participates in cofactor biosynthesis; (R)-pantothenate biosynthesis; (R)-pantoate from 3-methyl-2-oxobutanoate: step 1/2. Its function is as follows. Catalyzes the reversible reaction in which hydroxymethyl group from 5,10-methylenetetrahydrofolate is transferred onto alpha-ketoisovalerate to form ketopantoate. This is 3-methyl-2-oxobutanoate hydroxymethyltransferase from Xanthomonas campestris pv. campestris (strain B100).